Reading from the N-terminus, the 460-residue chain is Phosphoglucomutase (460 aa).

Ser-103 acts as the Phosphoserine intermediate in catalysis. Ser-103 is a Mg(2+) binding site. Substrate is bound by residues 103–104 (SH) and Lys-113. Asp-239, Asp-241, and Asp-243 together coordinate Mg(2+). Substrate-binding positions include 243–244 (DR), Thr-303, and 322–324 (EMS).

The protein belongs to the phosphohexose mutase family. The cofactor is Mg(2+).

The protein resides in the cytoplasm. The catalysed reaction is alpha-D-glucose 1-phosphate = alpha-D-glucose 6-phosphate. Its function is as follows. This enzyme participates in both the breakdown and synthesis of glucose. This is Phosphoglucomutase (pgm) from Neisseria meningitidis serogroup B (strain ATCC BAA-335 / MC58).